Consider the following 193-residue polypeptide: Protein hunchback (193 aa).

2 disordered regions span residues 16–126 (SHHH…ATTT) and 146–193 (SNDK…KYMA). Over residues 17–31 (HHHHHHHAHHSHHQH) the composition is skewed to basic residues. Composition is skewed to low complexity over residues 35–46 (SNSNSNASSPHQ) and 56–77 (SSNN…QQQQ). The segment covering 89–99 (PSPSNNDQNSR) has biased composition (polar residues). The span at 174–193 (EPEKEHDLMSNSSEDMKYMA) shows a compositional bias: basic and acidic residues.

This sequence belongs to the hunchback C2H2-type zinc-finger protein family.

It localises to the nucleus. Its function is as follows. Gap class segmentation protein that controls development of head structures. This Drosophila iki (Fruit fly) protein is Protein hunchback (hb).